The primary structure comprises 129 residues: GEL complex subunit OPTI (129 aa).

Topologically, residues 1–44 are cytoplasmic; sequence MSGGRRKEEPPQPQLANGALKVSVWSKVLRSDAAWEDKDEFLDV. Residues 45–65 form a helical membrane-spanning segment; the sequence is IYWFRQIIAVVLGVIWGVLPL. Position 66 (Arg66) is a topological domain, lumenal. A helical membrane pass occupies residues 67–84; sequence GFLGIAGFCVINAGVLYL. At 85–103 the chain is on the cytoplasmic side; it reads YFSNYLQIDEEEYGGTWEL. Residues 104-127 form a helical membrane-spanning segment; it reads TKEGFMTSFALFMVIWIIFYTAIH. At 128-129 the chain is on the lumenal side; the sequence is YD.

This sequence belongs to the EMC6 family. As to quaternary structure, component of the GET- and EMC-like (GEL) complex, composed of RAB5IF/OPTI and TMCO1. The GEL complex is part of the multi-pass translocon (MPT) complex, composed of three subcomplexes, the GEL complex (composed of RAB5IF/OPTI and TMCO1), the BOS complex (composed of NCLN/Nicalin, NOMO1 and TMEM147) and the PAT complex (composed of WDR83OS/Asterix and CCDC47). The MPT complex associates with the SEC61 complex. Interacts with NDUFS3, NDUFA4, NDUFV1, NDUFA9 and NDUFS8 of the mitochondrial membrane respiratory chain NADH dehydrogenase (Complex I). Interacts with UQCRC2 of the ubiquinol-cytochrome c reductase complex (Complex III). Interacts with COX5A and COX7C of the cytochrome c oxidase complex (Complex IV).

The protein localises to the endoplasmic reticulum membrane. It localises to the mitochondrion inner membrane. Component of the multi-pass translocon (MPT) complex that mediates insertion of multi-pass membrane proteins into the lipid bilayer of membranes. The MPT complex takes over after the SEC61 complex: following membrane insertion of the first few transmembrane segments of proteins by the SEC61 complex, the MPT complex occludes the lateral gate of the SEC61 complex to promote insertion of subsequent transmembrane regions. Within the MPT complex, the GEL subcomplex may mediate insertion of transmembrane regions into the membrane. In addition to its role in multi-pass membrane insertion, RAB5IF/OPTI also acts as an assembly factor for mitochondrial respiratory complexes. This is GEL complex subunit OPTI (RAB5IF) from Canis lupus familiaris (Dog).